Reading from the N-terminus, the 128-residue chain is MGLYALTAIGAGAALGAWLRWWFGMTLNPLFPTLPLGTLAANLTGGYLIGAAIEYFHHNSFLPPEARLFAITGFLGGLTTFSTFSAETVTLLLRGQYAWTFVIIFSHLTGSLVMTILGIMTVKWLAQH.

Transmembrane regions (helical) follow at residues 3 to 23, 33 to 53, 69 to 89, and 99 to 119; these read LYAL…RWWF, TLPL…GAAI, FAIT…AETV, and WTFV…ILGI. Positions 76 and 79 each coordinate Na(+).

Belongs to the fluoride channel Fluc/FEX (TC 1.A.43) family.

Its subcellular location is the cell inner membrane. The catalysed reaction is fluoride(in) = fluoride(out). With respect to regulation, na(+) is not transported, but it plays an essential structural role and its presence is essential for fluoride channel function. Its function is as follows. Fluoride-specific ion channel. Important for reducing fluoride concentration in the cell, thus reducing its toxicity. The chain is Fluoride-specific ion channel FluC from Nitrosospira multiformis (strain ATCC 25196 / NCIMB 11849 / C 71).